We begin with the raw amino-acid sequence, 178 residues long: CASP-like protein 4D1 (178 aa).

Topologically, residues 1–14 (MAPPPPSPPSVTLR) are cytoplasmic. A helical membrane pass occupies residues 15 to 35 (TVLLLLRVLTAAFLVITVVLI). Residues 36-60 (STNTVTLEVSSTSIKMRFNDVYAYR) lie on the Extracellular side of the membrane. Residues 61–81 (YMLSAAVIGLLYAVVQLFLTI) traverse the membrane as a helical segment. At 82 to 149 (SQFATGTTHP…KFFSKGYASA (68 aa)) the chain is on the cytoplasmic side. Residues 150-170 (SLLLFAFVSLAVLSVFSSLAL) form a helical membrane-spanning segment. Over 171 to 178 (SKRPIQVS) the chain is Extracellular.

It belongs to the Casparian strip membrane proteins (CASP) family. In terms of assembly, homodimer and heterodimers.

It is found in the cell membrane. The chain is CASP-like protein 4D1 from Arabidopsis lyrata subsp. lyrata (Lyre-leaved rock-cress).